Reading from the N-terminus, the 327-residue chain is Malate dehydrogenase (327 aa).

12-18 (GAAGQIG) is an NAD(+) binding site. The substrate site is built by R93 and R99. Residues N106, Q113, and 130–132 (VGN) each bind NAD(+). Substrate contacts are provided by N132 and R163. The Proton acceptor role is filled by H188.

It belongs to the LDH/MDH superfamily. MDH type 2 family.

The catalysed reaction is (S)-malate + NAD(+) = oxaloacetate + NADH + H(+). Functionally, catalyzes the reversible oxidation of malate to oxaloacetate. The protein is Malate dehydrogenase of Cupriavidus necator (strain ATCC 17699 / DSM 428 / KCTC 22496 / NCIMB 10442 / H16 / Stanier 337) (Ralstonia eutropha).